Here is a 143-residue protein sequence, read N- to C-terminus: ATP synthase subunit b' (143 aa).

Residues 6–26 (ATLPLMALQFVVLAFLLNAIF) traverse the membrane as a helical segment.

Belongs to the ATPase B chain family. As to quaternary structure, F-type ATPases have 2 components, F(1) - the catalytic core - and F(0) - the membrane proton channel. F(1) has five subunits: alpha(3), beta(3), gamma(1), delta(1), epsilon(1). F(0) has four main subunits: a(1), b(1), b'(1) and c(10-14). The alpha and beta chains form an alternating ring which encloses part of the gamma chain. F(1) is attached to F(0) by a central stalk formed by the gamma and epsilon chains, while a peripheral stalk is formed by the delta, b and b' chains.

Its subcellular location is the cellular thylakoid membrane. In terms of biological role, f(1)F(0) ATP synthase produces ATP from ADP in the presence of a proton or sodium gradient. F-type ATPases consist of two structural domains, F(1) containing the extramembraneous catalytic core and F(0) containing the membrane proton channel, linked together by a central stalk and a peripheral stalk. During catalysis, ATP synthesis in the catalytic domain of F(1) is coupled via a rotary mechanism of the central stalk subunits to proton translocation. Component of the F(0) channel, it forms part of the peripheral stalk, linking F(1) to F(0). The b'-subunit is a diverged and duplicated form of b found in plants and photosynthetic bacteria. The protein is ATP synthase subunit b' of Synechocystis sp. (strain ATCC 27184 / PCC 6803 / Kazusa).